Reading from the N-terminus, the 563-residue chain is Pyruvate decarboxylase isozyme 2 (563 aa).

D28, H115, Y157, and R224 together coordinate pyruvate. Thiamine diphosphate contacts are provided by residues T390 and 413-415 (GSI). Residue D444 participates in Mg(2+) binding. Thiamine diphosphate contacts are provided by residues 445–446 (GS) and 471–476 (NNGYTI). Positions 471 and 473 each coordinate Mg(2+). E477 is a binding site for pyruvate.

The protein belongs to the TPP enzyme family. As to quaternary structure, homotetramer. Mg(2+) serves as cofactor. Thiamine diphosphate is required as a cofactor.

The protein localises to the cytoplasm. The protein resides in the nucleus. The catalysed reaction is pyruvate + H(+) = acetaldehyde + CO2. The enzyme catalyses 3-methyl-2-oxobutanoate + H(+) = 2-methylpropanal + CO2. It catalyses the reaction (S)-3-methyl-2-oxopentanoate + H(+) = 2-methylbutanal + CO2. It carries out the reaction indole-3-pyruvate + H(+) = indole-3-acetaldehyde + CO2. The catalysed reaction is 3-phenylpyruvate + H(+) = 2-phenylacetaldehyde + CO2. The enzyme catalyses 2-oxobutanoate + H(+) = propanal + CO2. It catalyses the reaction 2-oxopentanoate + H(+) = butanal + CO2. It carries out the reaction 2 acetaldehyde = acetoin. The catalysed reaction is acetaldehyde + pyruvate + H(+) = acetoin + CO2. Its pathway is fermentation; ethanol fermentation. The protein operates within amino-acid degradation; Ehrlich pathway. With respect to regulation, allosterically activated by its substrate, pyruvate. Its function is as follows. Second most abundant of three pyruvate decarboxylases (PDC1, PDC5, PDC6) implicated in the nonoxidative conversion of pyruvate to acetaldehyde and carbon dioxide during alcoholic fermentation. Most of the produced acetaldehyde is subsequently reduced to ethanol, but some is required for cytosolic acetyl-CoA production for biosynthetic pathways. The enzyme is also one of five 2-oxo acid decarboxylases (PDC1, PDC5, PDC6, ARO10, and THI3) able to decarboxylate more complex 2-oxo acids (alpha-keto-acids) than pyruvate, which seem mainly involved in amino acid catabolism. Here the enzyme catalyzes the decarboxylation of amino acids, which, in a first step, have been transaminated to the corresponding 2-oxo acids. In a third step, the resulting aldehydes are reduced to alcohols, collectively referred to as fusel oils or alcohols. Its preferred substrates are the transaminated amino acids derived from threonine (2-oxobutanoate), norvaline (2-oxopentanoate), valine (3-methyl-2-oxobutanoate, also alpha-keto-isovalerate), isoleucine ((3S)-3-methyl-2-oxopentanoate, also alpha-keto-beta-methylvalerate), phenylalanine (phenylpyruvate), and tryptophan (3-(indol-3-yl)pyruvate), whereas transaminated leucine is no substrate. In a side-reaction the carbanionic intermediate (or active aldehyde) generated by decarboxylation or by activation of an aldehyde can react with an aldehyde via condensation (or carboligation) yielding a 2-hydroxy ketone, collectively called acyloins. The protein is Pyruvate decarboxylase isozyme 2 (PDC5) of Saccharomyces cerevisiae (strain ATCC 204508 / S288c) (Baker's yeast).